Here is a 71-residue protein sequence, read N- to C-terminus: UPF0346 protein BCQ_2236 (71 aa).

It belongs to the UPF0346 family.

The protein is UPF0346 protein BCQ_2236 of Bacillus cereus (strain Q1).